The following is a 227-amino-acid chain: Ion-translocating oxidoreductase complex subunit E (227 aa).

6 helical membrane passes run 18 to 38 (ALVQLLGLCPLLAVSATVTNA), 39 to 59 (LGLGIATILVLVGSNLIVSLV), 69 to 89 (IPVFVMIIASLVTCVQLLMNA), 93 to 113 (GLYLSLGIFIPLIVTNCIIIG), 125 to 145 (LPAVLDGLWMGMGMTAVLVLL), and 182 to 202 (HFLLAMLPPGAFLGVGFLIAL).

The protein belongs to the NqrDE/RnfAE family. The complex is composed of six subunits: RnfA, RnfB, RnfC, RnfD, RnfE and RnfG.

It localises to the cell inner membrane. Its function is as follows. Part of a membrane-bound complex that couples electron transfer with translocation of ions across the membrane. This chain is Ion-translocating oxidoreductase complex subunit E, found in Aliivibrio fischeri (strain ATCC 700601 / ES114) (Vibrio fischeri).